A 315-amino-acid chain; its full sequence is uncharacterized protein (315 aa).

This is an uncharacterized protein from Caenorhabditis elegans.